Reading from the N-terminus, the 354-residue chain is UDP-3-O-acylglucosamine N-acyltransferase (354 aa).

The Proton acceptor role is filled by His-250.

This sequence belongs to the transferase hexapeptide repeat family. LpxD subfamily. As to quaternary structure, homotrimer.

The catalysed reaction is a UDP-3-O-[(3R)-3-hydroxyacyl]-alpha-D-glucosamine + a (3R)-hydroxyacyl-[ACP] = a UDP-2-N,3-O-bis[(3R)-3-hydroxyacyl]-alpha-D-glucosamine + holo-[ACP] + H(+). It participates in bacterial outer membrane biogenesis; LPS lipid A biosynthesis. In terms of biological role, catalyzes the N-acylation of UDP-3-O-acylglucosamine using 3-hydroxyacyl-ACP as the acyl donor. Is involved in the biosynthesis of lipid A, a phosphorylated glycolipid that anchors the lipopolysaccharide to the outer membrane of the cell. This Methylococcus capsulatus (strain ATCC 33009 / NCIMB 11132 / Bath) protein is UDP-3-O-acylglucosamine N-acyltransferase.